A 180-amino-acid polypeptide reads, in one-letter code: Shikimate kinase (180 aa).

Position 14–19 (Gly14–Cys19) interacts with ATP. Ser18 lines the Mg(2+) pocket. The substrate site is built by Asp36, Arg60, and Gly82. Arg120 provides a ligand contact to ATP. Arg139 is a substrate binding site.

The protein belongs to the shikimate kinase family. In terms of assembly, monomer. The cofactor is Mg(2+).

It localises to the cytoplasm. The enzyme catalyses shikimate + ATP = 3-phosphoshikimate + ADP + H(+). The protein operates within metabolic intermediate biosynthesis; chorismate biosynthesis; chorismate from D-erythrose 4-phosphate and phosphoenolpyruvate: step 5/7. In terms of biological role, catalyzes the specific phosphorylation of the 3-hydroxyl group of shikimic acid using ATP as a cosubstrate. The chain is Shikimate kinase from Xanthomonas campestris pv. campestris (strain 8004).